The sequence spans 274 residues: 2,3,4,5-tetrahydropyridine-2,6-dicarboxylate N-succinyltransferase (274 aa).

The protein belongs to the transferase hexapeptide repeat family.

Its subcellular location is the cytoplasm. The catalysed reaction is (S)-2,3,4,5-tetrahydrodipicolinate + succinyl-CoA + H2O = (S)-2-succinylamino-6-oxoheptanedioate + CoA. The protein operates within amino-acid biosynthesis; L-lysine biosynthesis via DAP pathway; LL-2,6-diaminopimelate from (S)-tetrahydrodipicolinate (succinylase route): step 1/3. This Alteromonas mediterranea (strain DSM 17117 / CIP 110805 / LMG 28347 / Deep ecotype) protein is 2,3,4,5-tetrahydropyridine-2,6-dicarboxylate N-succinyltransferase.